Reading from the N-terminus, the 223-residue chain is Ribonuclease T (223 aa).

One can recognise an Exonuclease domain in the interval 20–194 (VVIDVETAGF…YDTERTAELF (175 aa)). Mg(2+) contacts are provided by aspartate 23, glutamate 25, histidine 181, and aspartate 186. The Proton donor/acceptor role is filled by histidine 181.

It belongs to the RNase T family. As to quaternary structure, homodimer. Mg(2+) is required as a cofactor.

Its function is as follows. Trims short 3' overhangs of a variety of RNA species, leaving a one or two nucleotide 3' overhang. Responsible for the end-turnover of tRNA: specifically removes the terminal AMP residue from uncharged tRNA (tRNA-C-C-A). Also appears to be involved in tRNA biosynthesis. The sequence is that of Ribonuclease T from Shewanella baltica (strain OS155 / ATCC BAA-1091).